Here is a 134-residue protein sequence, read N- to C-terminus: Protein Turandot E (134 aa).

The N-terminal stretch at 1–38 (MSYTRTVHSSTSILKMNSALQISCLLVVLGCLLGSGHC) is a signal peptide.

The protein belongs to the Turandot family.

It localises to the secreted. Its function is as follows. A humoral factor that may play a role in stress tolerance. This chain is Protein Turandot E, found in Drosophila simulans (Fruit fly).